The following is a 547-amino-acid chain: MARFVFITGGVVSSLGKGLASAALGALLQARGFSVRLRKLDPYLNVDPGTMSPFEHGEVFVTDDGAETDLDLGHYERFTGVAARRTDSVSSGRIYSNVLEKERRGDYLGKTIQVIPHVTNEIKDFISIGEDEVDFMLCEIGGTVGDIEGLPFFEAIRQFGQDKPRGQCIFMHLTLLPYIAASGELKTKPTQHSVKELRSIGIAPDVLVCRSEGPIPQKERDKLALFCNVRPESVIAAQDLKSIYEAPLAYHREGLDQAVLDAFSISPAPKPDLTVWHDVADRIHNPEGEVNVAIVGKYTQLEDAYKSIAEALTHGGMANRVKVKSEWIDAEIFEREDPVPHLEKFDAILVPGGFGERGTEGKIKAAQFAREHKIPYLGICLGMQMAVIESARHLTDLTDAGSEEFDHEAGKRRFTPVVYHLKEWVQGNHKVERKVDDDKGGTMRLGAYTAKLVEGSKVAQIYGSTTIEERHRHRYEVDIQYRDQLQAEGLIFSGMSPDGRLPEIVEVKDHPWFIGVQFHPELKSKPFAPHPLFADFVRAAKEVSRLV.

Positions 1–265 (MARFVFITGG…DQAVLDAFSI (265 aa)) are amidoligase domain. Ser-13 contributes to the CTP binding site. UTP is bound at residue Ser-13. ATP contacts are provided by residues 14–19 (SLGKGL) and Asp-71. Positions 71 and 139 each coordinate Mg(2+). CTP is bound by residues 146 to 148 (DIE), 186 to 191 (KTKPTQ), and Lys-222. Residues 186-191 (KTKPTQ) and Lys-222 each bind UTP. Residues 291 to 546 (NVAIVGKYTQ…VRAAKEVSRL (256 aa)) form the Glutamine amidotransferase type-1 domain. Gly-353 is an L-glutamine binding site. The active-site Nucleophile; for glutamine hydrolysis is Cys-380. L-glutamine contacts are provided by residues 381–384 (LGMQ), Glu-404, and Arg-474. Residues His-519 and Glu-521 contribute to the active site.

This sequence belongs to the CTP synthase family. Homotetramer.

The enzyme catalyses UTP + L-glutamine + ATP + H2O = CTP + L-glutamate + ADP + phosphate + 2 H(+). It carries out the reaction L-glutamine + H2O = L-glutamate + NH4(+). It catalyses the reaction UTP + NH4(+) + ATP = CTP + ADP + phosphate + 2 H(+). Its pathway is pyrimidine metabolism; CTP biosynthesis via de novo pathway; CTP from UDP: step 2/2. Allosterically activated by GTP, when glutamine is the substrate; GTP has no effect on the reaction when ammonia is the substrate. The allosteric effector GTP functions by stabilizing the protein conformation that binds the tetrahedral intermediate(s) formed during glutamine hydrolysis. Inhibited by the product CTP, via allosteric rather than competitive inhibition. Its function is as follows. Catalyzes the ATP-dependent amination of UTP to CTP with either L-glutamine or ammonia as the source of nitrogen. Regulates intracellular CTP levels through interactions with the four ribonucleotide triphosphates. The polypeptide is CTP synthase (Dinoroseobacter shibae (strain DSM 16493 / NCIMB 14021 / DFL 12)).